The primary structure comprises 360 residues: Biotin synthase (360 aa).

The tract at residues 1-25 (MQHAPLNFVPDAAKVPPTPGQSPNA) is disordered. Positions 58 to 285 (NAVQLSTLLS…KAMVRLSAGR (228 aa)) constitute a Radical SAM core domain. Residues C73, C77, and C80 each coordinate [4Fe-4S] cluster. The [2Fe-2S] cluster site is built by C117, C148, C208, and R280. Positions 340–360 (QAEGAQHSHSSHCHIDITPAD) are disordered.

Belongs to the radical SAM superfamily. Biotin synthase family. In terms of assembly, homodimer. The cofactor is [4Fe-4S] cluster. It depends on [2Fe-2S] cluster as a cofactor.

It carries out the reaction (4R,5S)-dethiobiotin + (sulfur carrier)-SH + 2 reduced [2Fe-2S]-[ferredoxin] + 2 S-adenosyl-L-methionine = (sulfur carrier)-H + biotin + 2 5'-deoxyadenosine + 2 L-methionine + 2 oxidized [2Fe-2S]-[ferredoxin]. The protein operates within cofactor biosynthesis; biotin biosynthesis; biotin from 7,8-diaminononanoate: step 2/2. Functionally, catalyzes the conversion of dethiobiotin (DTB) to biotin by the insertion of a sulfur atom into dethiobiotin via a radical-based mechanism. In Ralstonia nicotianae (strain ATCC BAA-1114 / GMI1000) (Ralstonia solanacearum), this protein is Biotin synthase.